The primary structure comprises 220 residues: Deoxyribose-phosphate aldolase (220 aa).

The active-site Proton donor/acceptor is the aspartate 89. Catalysis depends on lysine 151, which acts as the Schiff-base intermediate with acetaldehyde. Lysine 180 (proton donor/acceptor) is an active-site residue.

It belongs to the DeoC/FbaB aldolase family. DeoC type 1 subfamily.

The protein resides in the cytoplasm. It catalyses the reaction 2-deoxy-D-ribose 5-phosphate = D-glyceraldehyde 3-phosphate + acetaldehyde. It functions in the pathway carbohydrate degradation; 2-deoxy-D-ribose 1-phosphate degradation; D-glyceraldehyde 3-phosphate and acetaldehyde from 2-deoxy-alpha-D-ribose 1-phosphate: step 2/2. Its function is as follows. Catalyzes a reversible aldol reaction between acetaldehyde and D-glyceraldehyde 3-phosphate to generate 2-deoxy-D-ribose 5-phosphate. The polypeptide is Deoxyribose-phosphate aldolase (Lactococcus lactis subsp. lactis (strain IL1403) (Streptococcus lactis)).